The primary structure comprises 219 residues: Small ribosomal subunit protein uS3c (219 aa).

One can recognise a KH type-2 domain in the interval 39-109; that stretch reads IRQYIEKNLS…QIRINVIEVK (71 aa).

It belongs to the universal ribosomal protein uS3 family. As to quaternary structure, part of the 30S ribosomal subunit.

It is found in the plastid. The protein resides in the cyanelle. In Cyanophora paradoxa, this protein is Small ribosomal subunit protein uS3c (rps3).